A 370-amino-acid chain; its full sequence is MWHSPFSTAFTLFLGFFTLTLALPTNSLATTGHFTIEQRLINTIKSDWPPKELWRGLRKHHRPLPPAVSRISRHGGSFANGTVKVTPDEYDTEFVNEITIGNDTLFVDIDTGSSDFWVFSSQLPEQSQRNHRIYHPEKTGIKLPKQIWETSYGDGTGAAGNVFLDKVNLAGLEVSSQVTPKKQKTWFGNIMERLEKPIFTACLKHKAPGFYDFGFIDKTKHIGNPSYLPVDNSRGWWETTFNGFSTGPSDNSTYRFRAVVDTGTTFMLLPREITEQYYSSITGSAFDRENGGWTFPCNATLPEFAIHVNDYKAIVPGEHINWAQIPGTNTCFGGIQPVDRSPAVLGGSFLKSQFVIFDHDGPKMGFAAQR.

The N-terminal stretch at 1–21 (MWHSPFSTAFTLFLGFFTLTL) is a signal peptide. N-linked (GlcNAc...) asparagine glycans are attached at residues N80 and N102. The Peptidase A1 domain maps to 94–367 (FVNEITIGND…DHDGPKMGFA (274 aa)). Residue D110 is part of the active site. N-linked (GlcNAc...) asparagine glycosylation is present at N251. Residue D261 is part of the active site. N298 carries an N-linked (GlcNAc...) asparagine glycan.

This sequence belongs to the peptidase A1 family.

It is found in the secreted. Functionally, probable aspartic-type endopeptidase which contributes to virulence. This Arthroderma benhamiae (strain ATCC MYA-4681 / CBS 112371) (Trichophyton mentagrophytes) protein is Probable aspartic-type endopeptidase ARB_04018.